A 358-amino-acid polypeptide reads, in one-letter code: 3-dehydroquinate synthase (358 aa).

NAD(+)-binding positions include 102–106, 126–127, lysine 139, and lysine 148; these read GVVGD and TT. Zn(2+) contacts are provided by glutamate 181, histidine 244, and histidine 260.

This sequence belongs to the sugar phosphate cyclases superfamily. Dehydroquinate synthase family. Requires Co(2+) as cofactor. Zn(2+) is required as a cofactor. It depends on NAD(+) as a cofactor.

Its subcellular location is the cytoplasm. The enzyme catalyses 7-phospho-2-dehydro-3-deoxy-D-arabino-heptonate = 3-dehydroquinate + phosphate. It participates in metabolic intermediate biosynthesis; chorismate biosynthesis; chorismate from D-erythrose 4-phosphate and phosphoenolpyruvate: step 2/7. In terms of biological role, catalyzes the conversion of 3-deoxy-D-arabino-heptulosonate 7-phosphate (DAHP) to dehydroquinate (DHQ). In Symbiobacterium thermophilum (strain DSM 24528 / JCM 14929 / IAM 14863 / T), this protein is 3-dehydroquinate synthase.